The sequence spans 255 residues: 14-3-3-like protein B (255 aa).

Belongs to the 14-3-3 family.

The protein is 14-3-3-like protein B of Nicotiana tabacum (Common tobacco).